A 262-amino-acid polypeptide reads, in one-letter code: WW domain-binding protein 2 (262 aa).

In terms of domain architecture, GRAM spans 1–84 (MALNKNHSEG…YLMKDCEVKQ (84 aa)). Y192 carries the phosphotyrosine modification. The short motif at 196-200 (PPPPY) is the PPxY motif 1 element. A compositionally biased stretch (pro residues) spans 197-206 (PPPYPGPMEP). Residues 197-262 (PPPYPGPMEP…YYPPEDKKTQ (66 aa)) are disordered. The segment covering 219–231 (AAEAKAAEAAASA) has biased composition (low complexity). Residue Y232 is modified to Phosphotyrosine. A compositionally biased stretch (pro residues) spans 246–255 (SQPPPPPYYP). The PPxY motif 2 signature appears at 249 to 253 (PPPPY).

As to quaternary structure, binds to the WW domain of YAP1, WWP1 and WWP2. Interacts with NEDD4. Interacts with ESR1 and UBE3A. In terms of processing, phosphorylated in repsonse to EGF as well as estrogen and progesterone hormones. Tyr-192 and Tyr-232 are phosphorylated by YES and SRC inducing nuclear translocation.

The protein localises to the cytoplasm. Its subcellular location is the nucleus. Acts as a transcriptional coactivator of estrogen and progesterone receptors (ESR1 and PGR) upon hormone activation. In presence of estrogen, binds to ESR1-responsive promoters. Synergizes with YAP1 to enhance PGR activity. Modulates expression of post-synaptic scaffolding proteins via regulation of ESR1, ESR2 and PGR. The chain is WW domain-binding protein 2 (Wbp2) from Rattus norvegicus (Rat).